The primary structure comprises 452 residues: Tissue alpha-L-fucosidase (452 aa).

A signal peptide spans 1–17 (MLLLLLLLLVAAAQAVA). Asparagine 227, asparagine 254, asparagine 368, and asparagine 378 each carry an N-linked (GlcNAc...) asparagine glycan.

This sequence belongs to the glycosyl hydrolase 29 family. Homotetramer.

Its subcellular location is the lysosome. It catalyses the reaction an alpha-L-fucoside + H2O = L-fucose + an alcohol. It carries out the reaction a neolactoside IV(2)-alpha-Fuc-nLc4Cer(d18:1(4E)) + H2O = a neolactoside nLc4Cer(d18:1(4E)) + L-fucose. The enzyme catalyses a neolactoside IV(2)-alpha-Fuc-nLc4Cer(d18:0) + H2O = a neolactoside nLc4Cer(d18:0) + L-fucose. In terms of biological role, alpha-L-fucosidase is responsible for hydrolyzing the alpha-1,6-linked fucose joined to the reducing-end N-acetylglucosamine of the carbohydrate moieties of glycoproteins. The chain is Tissue alpha-L-fucosidase (Fuca1) from Mus musculus (Mouse).